A 44-amino-acid chain; its full sequence is Thymosin beta-4 (44 aa).

Basic and acidic residues predominate over residues 1–25 (MSDKPDMAEIEKFDKSKLKKTETQE). The tract at residues 1–44 (MSDKPDMAEIEKFDKSKLKKTETQEKNPLPSKETIEQEKQAGES) is disordered. Ser-2 is subject to N-acetylserine. The residue at position 2 (Ser-2) is a Phosphoserine. Lys-4 bears the N6-acetyllysine mark. At Lys-12 the chain carries N6-acetyllysine; alternate. A Glycyl lysine isopeptide (Lys-Gly) (interchain with G-Cter in SUMO2); alternate cross-link involves residue Lys-12. Position 23 is a phosphothreonine (Thr-23). Position 26 is an N6-acetyllysine (Lys-26). Ser-31 is modified (phosphoserine). Position 32 is an N6-acetyllysine (Lys-32). Positions 33-44 (ETIEQEKQAGES) are enriched in basic and acidic residues. The residue at position 34 (Thr-34) is a Phosphothreonine. Lys-39 carries the post-translational modification N6-acetyllysine.

It belongs to the thymosin beta family. Identified in a complex composed of ACTA1, COBL, GSN AND TMSB4X. Interacts with SERPINB1. Post-translationally, acSDKP is inactivated by ACE, which removes the dipeptide Lys-Pro from its C-terminus.

It is found in the cytoplasm. The protein localises to the cytoskeleton. Plays an important role in the organization of the cytoskeleton. Binds to and sequesters actin monomers (G actin) and therefore inhibits actin polymerization. Functionally, potent inhibitor of bone marrow derived stem cell differentiation. Acts by inhibits the entry of hematopoietic pluripotent stem cells into the S-phase. The chain is Thymosin beta-4 (TMSB4) from Bos taurus (Bovine).